Reading from the N-terminus, the 137-residue chain is MSTEDLYQDDVESLEDYDDETAEQEHEHEHEQQWAEPDDESEYAEAEPDDDEQEEQEEQQAPSGLDSLALDLTLRCGELRLTLAELRRLDAGTILEVGGVAPGYATLCHGERVVAEGELVDVDGRLGLQITRLAAQP.

The segment covering 1–22 (MSTEDLYQDDVESLEDYDDETA) has biased composition (acidic residues). Residues 1 to 67 (MSTEDLYQDD…EQQAPSGLDS (67 aa)) form a disordered region. The span at 23–33 (EQEHEHEHEQQ) shows a compositional bias: basic and acidic residues. A compositionally biased stretch (acidic residues) spans 36-58 (EPDDESEYAEAEPDDDEQEEQEE).

The protein belongs to the FliN/MopA/SpaO family. Homotetramer. The four monomers assemble into two tightly bound homodimers. Interacts with HrcQa.

It is found in the cytoplasm. Functionally, component of the type III secretion system, which is required for effector protein delivery, parasitism, and pathogenicity. Probably participates in the formation of a C-ring-like assembly along with HrcQa. This Pseudomonas syringae pv. tomato (strain ATCC BAA-871 / DC3000) protein is Type III secretion protein HrcQb (hrcQb).